A 124-amino-acid polypeptide reads, in one-letter code: Ribonuclease pancreatic (124 aa).

Over residues lysine 1 to proline 15 the composition is skewed to basic and acidic residues. A disordered region spans residues lysine 1–asparagine 24. Residues lysine 7 and arginine 10 each coordinate substrate. Residue histidine 12 is the Proton acceptor of the active site. N-linked (GlcNAc...) asparagine glycans are attached at residues asparagine 21 and asparagine 34. 4 cysteine pairs are disulfide-bonded: cysteine 26–cysteine 84, cysteine 40–cysteine 95, cysteine 58–cysteine 110, and cysteine 65–cysteine 72. Substrate is bound by residues lysine 41–threonine 45 and lysine 66. Asparagine 76 is a glycosylation site (N-linked (GlcNAc...) asparagine). Arginine 85 serves as a coordination point for substrate. Histidine 119 acts as the Proton donor in catalysis.

Belongs to the pancreatic ribonuclease family. Monomer. Interacts with and forms tight 1:1 complexes with RNH1. Dimerization of two such complexes may occur. Interaction with RNH1 inhibits this protein. As to expression, pancreas.

Its subcellular location is the secreted. It catalyses the reaction an [RNA] containing cytidine + H2O = an [RNA]-3'-cytidine-3'-phosphate + a 5'-hydroxy-ribonucleotide-3'-[RNA].. It carries out the reaction an [RNA] containing uridine + H2O = an [RNA]-3'-uridine-3'-phosphate + a 5'-hydroxy-ribonucleotide-3'-[RNA].. Endonuclease that catalyzes the cleavage of RNA on the 3' side of pyrimidine nucleotides. Acts on single-stranded and double-stranded RNA. This Sus scrofa (Pig) protein is Ribonuclease pancreatic (RNASE1).